The sequence spans 311 residues: Probable hydrogen peroxide-inducible genes activator (311 aa).

Residues 8–65 (PTIAGLRAFVAVAEKRQFSGAATALGVSQSTLSQVLAALEAGLGTQLVERSTRRVFLT) enclose the HTH lysR-type domain. A DNA-binding region (H-T-H motif) is located at residues 25 to 44 (FSGAATALGVSQSTLSQVLA).

The protein belongs to the LysR transcriptional regulatory family.

Its function is as follows. Required for the induction the katG gene for catalase. Involved in the response to hydrogen peroxide. This is Probable hydrogen peroxide-inducible genes activator (oxyR) from Mycobacterium avium.